The sequence spans 444 residues: Type II NADH:quinone oxidoreductase (444 aa).

FAD-binding positions include 8 to 12 (GGGAG), asparagine 38, and serine 120. NAD(+) contacts are provided by residues 186 to 191 (VGGGAT) and glycine 285. FAD is bound by residues aspartate 325 and alanine 341.

Belongs to the NADH dehydrogenase family. The cofactor is FAD.

It localises to the cell inner membrane. It catalyses the reaction a quinone + NADH + H(+) = a quinol + NAD(+). It carries out the reaction a ubiquinone + NADH + H(+) = a ubiquinol + NAD(+). Alternative, nonproton pumping NADH:quinone oxidoreductase that delivers electrons to the respiratory chain by oxidation of NADH and reduction of quinones. Utilizes NADH exclusively, and electron flow from NADH to ubiquinone does not generate an electrochemical gradient. The chain is Type II NADH:quinone oxidoreductase (ndh) from Haemophilus influenzae (strain ATCC 51907 / DSM 11121 / KW20 / Rd).